A 227-amino-acid chain; its full sequence is Cytochrome c oxidase subunit 2 (227 aa).

Residues 1 to 14 lie on the Mitochondrial intermembrane side of the membrane; sequence MAYPMQLGFQDATS. The chain crosses the membrane as a helical span at residues 15–45; sequence PIMEELLHFHDHTLMIVFLISSLVLYIISLM. Residues 46–59 lie on the Mitochondrial matrix side of the membrane; that stretch reads LTTKLTHTSTMDAQ. The helical transmembrane segment at 60–87 threads the bilayer; that stretch reads EVETIWTILPAIILILIALPSLRILYMM. The Mitochondrial intermembrane portion of the chain corresponds to 88–227; that stretch reads DEINNPSLTV…YFEKWSASML (140 aa). Cu cation is bound by residues His-161, Cys-196, Glu-198, Cys-200, His-204, and Met-207. Residue Glu-198 coordinates Mg(2+). Phosphotyrosine is present on Tyr-218.

It belongs to the cytochrome c oxidase subunit 2 family. Component of the cytochrome c oxidase (complex IV, CIV), a multisubunit enzyme composed of 14 subunits. The complex is composed of a catalytic core of 3 subunits MT-CO1, MT-CO2 and MT-CO3, encoded in the mitochondrial DNA, and 11 supernumerary subunits COX4I, COX5A, COX5B, COX6A, COX6B, COX6C, COX7A, COX7B, COX7C, COX8 and NDUFA4, which are encoded in the nuclear genome. The complex exists as a monomer or a dimer and forms supercomplexes (SCs) in the inner mitochondrial membrane with NADH-ubiquinone oxidoreductase (complex I, CI) and ubiquinol-cytochrome c oxidoreductase (cytochrome b-c1 complex, complex III, CIII), resulting in different assemblies (supercomplex SCI(1)III(2)IV(1) and megacomplex MCI(2)III(2)IV(2)). Found in a complex with TMEM177, COA6, COX18, COX20, SCO1 and SCO2. Interacts with TMEM177 in a COX20-dependent manner. Interacts with COX20. Interacts with COX16. Requires Cu cation as cofactor.

The protein localises to the mitochondrion inner membrane. The enzyme catalyses 4 Fe(II)-[cytochrome c] + O2 + 8 H(+)(in) = 4 Fe(III)-[cytochrome c] + 2 H2O + 4 H(+)(out). Component of the cytochrome c oxidase, the last enzyme in the mitochondrial electron transport chain which drives oxidative phosphorylation. The respiratory chain contains 3 multisubunit complexes succinate dehydrogenase (complex II, CII), ubiquinol-cytochrome c oxidoreductase (cytochrome b-c1 complex, complex III, CIII) and cytochrome c oxidase (complex IV, CIV), that cooperate to transfer electrons derived from NADH and succinate to molecular oxygen, creating an electrochemical gradient over the inner membrane that drives transmembrane transport and the ATP synthase. Cytochrome c oxidase is the component of the respiratory chain that catalyzes the reduction of oxygen to water. Electrons originating from reduced cytochrome c in the intermembrane space (IMS) are transferred via the dinuclear copper A center (CU(A)) of subunit 2 and heme A of subunit 1 to the active site in subunit 1, a binuclear center (BNC) formed by heme A3 and copper B (CU(B)). The BNC reduces molecular oxygen to 2 water molecules using 4 electrons from cytochrome c in the IMS and 4 protons from the mitochondrial matrix. The sequence is that of Cytochrome c oxidase subunit 2 (MT-CO2) from Boselaphus tragocamelus (Nilgai).